We begin with the raw amino-acid sequence, 292 residues long: Undecaprenyl-diphosphatase (292 aa).

7 helical membrane-spanning segments follow: residues 1–21 (MSLV…FLPV), 46–66 (FVTI…RADI), 90–110 (LGWY…LLEH), 114–134 (ALGN…LLAA), 192–212 (FLLS…STVP), 225–245 (VVGT…LLAW), and 253–273 (VFVV…LSGV).

The protein belongs to the UppP family.

The protein localises to the cell inner membrane. It carries out the reaction di-trans,octa-cis-undecaprenyl diphosphate + H2O = di-trans,octa-cis-undecaprenyl phosphate + phosphate + H(+). Functionally, catalyzes the dephosphorylation of undecaprenyl diphosphate (UPP). Confers resistance to bacitracin. The polypeptide is Undecaprenyl-diphosphatase (Anaeromyxobacter dehalogenans (strain 2CP-1 / ATCC BAA-258)).